The primary structure comprises 306 residues: Aspartate carbamoyltransferase catalytic subunit (306 aa).

The carbamoyl phosphate site is built by R54 and T55. K83 is an L-aspartate binding site. Carbamoyl phosphate contacts are provided by R104, H132, and Q135. 2 residues coordinate L-aspartate: R165 and R227. Residues L266 and P267 each contribute to the carbamoyl phosphate site.

This sequence belongs to the aspartate/ornithine carbamoyltransferase superfamily. ATCase family. In terms of assembly, heterododecamer (2C3:3R2) of six catalytic PyrB chains organized as two trimers (C3), and six regulatory PyrI chains organized as three dimers (R2).

It catalyses the reaction carbamoyl phosphate + L-aspartate = N-carbamoyl-L-aspartate + phosphate + H(+). The protein operates within pyrimidine metabolism; UMP biosynthesis via de novo pathway; (S)-dihydroorotate from bicarbonate: step 2/3. In terms of biological role, catalyzes the condensation of carbamoyl phosphate and aspartate to form carbamoyl aspartate and inorganic phosphate, the committed step in the de novo pyrimidine nucleotide biosynthesis pathway. The protein is Aspartate carbamoyltransferase catalytic subunit of Clostridium novyi (strain NT).